Here is a 290-residue protein sequence, read N- to C-terminus: Acetyl-coenzyme A carboxylase carboxyl transferase subunit beta (290 aa).

The region spanning 30–290 is the CoA carboxyltransferase N-terminal domain; sequence IMTKCPKCKK…HAGQEVNKDA (261 aa). 4 residues coordinate Zn(2+): Cys34, Cys37, Cys53, and Cys56. The segment at 34-56 adopts a C4-type zinc-finger fold; sequence CPKCKKIMYTKELSENLNVCFNC.

It belongs to the AccD/PCCB family. As to quaternary structure, acetyl-CoA carboxylase is a heterohexamer composed of biotin carboxyl carrier protein (AccB), biotin carboxylase (AccC) and two subunits each of ACCase subunit alpha (AccA) and ACCase subunit beta (AccD). Requires Zn(2+) as cofactor.

Its subcellular location is the cytoplasm. It catalyses the reaction N(6)-carboxybiotinyl-L-lysyl-[protein] + acetyl-CoA = N(6)-biotinyl-L-lysyl-[protein] + malonyl-CoA. It functions in the pathway lipid metabolism; malonyl-CoA biosynthesis; malonyl-CoA from acetyl-CoA: step 1/1. Component of the acetyl coenzyme A carboxylase (ACC) complex. Biotin carboxylase (BC) catalyzes the carboxylation of biotin on its carrier protein (BCCP) and then the CO(2) group is transferred by the transcarboxylase to acetyl-CoA to form malonyl-CoA. The chain is Acetyl-coenzyme A carboxylase carboxyl transferase subunit beta from Staphylococcus carnosus (strain TM300).